The primary structure comprises 388 residues: Succinate--CoA ligase [ADP-forming] subunit beta (388 aa).

Residues lysine 46, 53–55 (GRG), glutamate 99, cysteine 102, and glutamate 107 contribute to the ATP site. Residues asparagine 199 and aspartate 213 each coordinate Mg(2+). Substrate contacts are provided by residues asparagine 264 and 321–323 (GIV).

Belongs to the succinate/malate CoA ligase beta subunit family. In terms of assembly, heterotetramer of two alpha and two beta subunits. Mg(2+) is required as a cofactor.

The enzyme catalyses succinate + ATP + CoA = succinyl-CoA + ADP + phosphate. It catalyses the reaction GTP + succinate + CoA = succinyl-CoA + GDP + phosphate. It participates in carbohydrate metabolism; tricarboxylic acid cycle; succinate from succinyl-CoA (ligase route): step 1/1. Succinyl-CoA synthetase functions in the citric acid cycle (TCA), coupling the hydrolysis of succinyl-CoA to the synthesis of either ATP or GTP and thus represents the only step of substrate-level phosphorylation in the TCA. The beta subunit provides nucleotide specificity of the enzyme and binds the substrate succinate, while the binding sites for coenzyme A and phosphate are found in the alpha subunit. This is Succinate--CoA ligase [ADP-forming] subunit beta from Actinobacillus pleuropneumoniae serotype 5b (strain L20).